The chain runs to 598 residues: Kinetochore-associated protein KNL-2 homolog (598 aa).

Positions 19–111 constitute an SANTA domain; that stretch reads VVLRDWWLIK…IFGFPPCWER (93 aa). Basic and acidic residues-rich tracts occupy residues 335–344 and 371–381; these read AKSSKPEKKG and KSAENKRKIDA. 4 disordered regions span residues 335–403, 445–500, 520–542, and 572–598; these read AKSS…NNAK, KESL…EEAE, PEKK…QKRS, and KDGS…LKIK. Residues 383 to 392 are compositionally biased toward polar residues; the sequence is KLQSPTSNVA. Polar residues predominate over residues 527–539; that stretch reads QKTNAASTDSLGQ. Positions 538-572 are required for localization at centromeres; it reads GQKRSRSGRVLVSSLEFWRNQIPVYDMDRNLIQVK.

The protein belongs to the KNL2 family. Expressed in shoot apical meristem, leaf primordia, basal parts of emerging leaves, inflorescence meristems, young inflorescences, developing flower buds, developing sepals and pistils, styles and young siliques.

It is found in the nucleus. The protein localises to the nucleoplasm. It localises to the nuclear body. Its subcellular location is the nucleolus. The protein resides in the chromosome. It is found in the centromere. In terms of biological role, involved in recognition of centromeres and centromeric localization of the centromere-specific histone CENH3. Required for normal progression of mitosis and meiosis. May play a role in the determination of the epigenetic status of centromeres. Binds DNA and RNA in vitro. This Arabidopsis thaliana (Mouse-ear cress) protein is Kinetochore-associated protein KNL-2 homolog.